We begin with the raw amino-acid sequence, 276 residues long: Rhomboid protease GlpG (276 aa).

A run of 6 helical transmembrane segments spans residues 94 to 114 (GPFTWAILLICIAVFILQNLL), 142 to 162 (AFMHFSLMHILFNLLWWWYLG), 169 to 189 (IGSGKLVVITVISALLSGFVQ), 192 to 212 (FSGPWFGGLSGVVYALMGYVW), 229 to 249 (LILFSLVWLIAGWFDVFGMAI), and 252 to 272 (GAHVAGLATGLAMAFVDTLHG). Ser-201 serves as the catalytic Nucleophile. His-254 is a catalytic residue.

Belongs to the peptidase S54 family.

It is found in the cell inner membrane. The enzyme catalyses Cleaves type-1 transmembrane domains using a catalytic dyad composed of serine and histidine that are contributed by different transmembrane domains.. In terms of biological role, rhomboid-type serine protease that catalyzes intramembrane proteolysis. The chain is Rhomboid protease GlpG from Klebsiella pneumoniae subsp. pneumoniae (strain ATCC 700721 / MGH 78578).